Here is a 364-residue protein sequence, read N- to C-terminus: Probable UDP-arabinopyranose mutase 1 (364 aa).

Residues 103–105 carry the DXD motif motif; the sequence is DDD. Residue Arg-151 is glycosylated (N-linked (Glc...) arginine).

Belongs to the RGP family. In terms of assembly, homopentamer or homohexamer. Requires Mn(2+) as cofactor. The cofactor is Mg(2+). In terms of processing, reversibly glycosylated by UDP-glucose, UDP-xylose and UDP-galactose, but not UDP-mannose.

The protein localises to the secreted. It localises to the cell wall. Its subcellular location is the cell junction. It is found in the plasmodesma. The protein resides in the golgi apparatus. It catalyses the reaction UDP-beta-L-arabinofuranose = UDP-beta-L-arabinopyranose. With respect to regulation, inhibited by inhibitor protein (IP) which may be a form of sucrose synthase. Its function is as follows. Probable UDP-L-arabinose mutase involved in the biosynthesis of cell wall non-cellulosic polysaccharides. Was initially shown to possess an autoglycosylating activity which is dependent on the presence of UDP-glucose and manganese. The sequence is that of Probable UDP-arabinopyranose mutase 1 from Pisum sativum (Garden pea).